Reading from the N-terminus, the 89-residue chain is Protein S100-A6 (89 aa).

2 EF-hand domains span residues 12 to 47 and 48 to 83; these read LVAI…IGAK and LQDA…LALI. 2 residues coordinate Ca(2+): Thr28 and Glu33. Lys40 is modified (N6-acetyllysine). An N6-acetyllysine; alternate modification is found at Lys47. Position 47 is an N6-succinyllysine; alternate (Lys47). Positions 61, 63, 65, 67, and 72 each coordinate Ca(2+).

This sequence belongs to the S-100 family. Homodimer; head to tail assembly of 2 subunits. Interacts with CACYBP in a calcium-dependent manner. Interacts with ANXA2 and ANXA11 (via N-terminus). Interacts with SUGT1. Interacts with TP53; has higher affinity for TP53 that is phosphorylated on its N-terminal domain, and lower affinity for TP53 that is phosphorylated on its C-terminal domain. Interacts with tropomyosin. Interacts with FKBP4. Interacts with PPP5C (via TPR repeats); the interaction is calcium-dependent and modulates PPP5C activity. Interacts with TPPP; this interaction inhibits TPPP dimerization.

The protein resides in the nucleus envelope. It is found in the cytoplasm. It localises to the cell membrane. May function as calcium sensor and modulator, contributing to cellular calcium signaling. May function by interacting with other proteins, such as TPR-containing proteins, and indirectly play a role in many physiological processes such as the reorganization of the actin cytoskeleton and in cell motility. Binds 2 calcium ions. Calcium binding is cooperative. The protein is Protein S100-A6 (S100a6) of Rattus norvegicus (Rat).